A 462-amino-acid chain; its full sequence is Beta-glucosidase 1A (462 aa).

Residues Gln-20, His-123, and Asn-169 each coordinate substrate. The active-site Proton donor is Glu-170. Tyr-301 contacts substrate. The active-site Nucleophile is Glu-365. Residues Trp-415 and 422 to 423 (EW) contribute to the substrate site.

It belongs to the glycosyl hydrolase 1 family.

It carries out the reaction Hydrolysis of terminal, non-reducing beta-D-glucosyl residues with release of beta-D-glucose.. In terms of biological role, plays an important role in cellulose degradation. Shows hydrolytic activity against several glycosidic compounds. This chain is Beta-glucosidase 1A, found in Phanerodontia chrysosporium (White-rot fungus).